We begin with the raw amino-acid sequence, 438 residues long: Serine hydroxymethyltransferase (438 aa).

Residues Leu-133 and 137-139 each bind (6S)-5,6,7,8-tetrahydrofolate; that span reads GHL. An N6-(pyridoxal phosphate)lysine modification is found at Lys-242.

This sequence belongs to the SHMT family. As to quaternary structure, homodimer. Pyridoxal 5'-phosphate serves as cofactor.

It is found in the cytoplasm. It carries out the reaction (6R)-5,10-methylene-5,6,7,8-tetrahydrofolate + glycine + H2O = (6S)-5,6,7,8-tetrahydrofolate + L-serine. Its pathway is one-carbon metabolism; tetrahydrofolate interconversion. It participates in amino-acid biosynthesis; glycine biosynthesis; glycine from L-serine: step 1/1. Functionally, catalyzes the reversible interconversion of serine and glycine with tetrahydrofolate (THF) serving as the one-carbon carrier. This reaction serves as the major source of one-carbon groups required for the biosynthesis of purines, thymidylate, methionine, and other important biomolecules. Also exhibits THF-independent aldolase activity toward beta-hydroxyamino acids, producing glycine and aldehydes, via a retro-aldol mechanism. The polypeptide is Serine hydroxymethyltransferase (Brucella suis (strain ATCC 23445 / NCTC 10510)).